The sequence spans 815 residues: Polyribonucleotide nucleotidyltransferase (815 aa).

Mg(2+) contacts are provided by Asp-489 and Asp-495. In terms of domain architecture, KH spans 556-615 (PRFYTLQIPTDKIRDLIGPGGKVIRGIVEATGVKIDVEDSGKVNVASSDQEAAKKALKMI). Positions 625–692 (GKTYLGTVTR…DGNRIKLSRK (68 aa)) constitute an S1 motif domain. The tract at residues 700-815 (AKMATEGGGD…GGGGGGRGRG (116 aa)) is disordered. Gly residues predominate over residues 723–734 (APGGVTFEGGYE). A compositionally biased stretch (acidic residues) spans 735 to 745 (GGDEPEVEEGE). Gly residues predominate over residues 775–815 (PHGGGGGAGRGGRGRRPGGGGGGGRGGHGGRGGGGGGRGRG).

This sequence belongs to the polyribonucleotide nucleotidyltransferase family. Requires Mg(2+) as cofactor.

The protein localises to the cytoplasm. The catalysed reaction is RNA(n+1) + phosphate = RNA(n) + a ribonucleoside 5'-diphosphate. Involved in mRNA degradation. Catalyzes the phosphorolysis of single-stranded polyribonucleotides processively in the 3'- to 5'-direction. The protein is Polyribonucleotide nucleotidyltransferase of Koribacter versatilis (strain Ellin345).